The following is an 838-amino-acid chain: Lymphoid-specific helicase (838 aa).

Residues 30–115 are a coiled coil; the sequence is MLEEEEQLEA…SLKVKKGKNS (86 aa). The segment covering 94–108 has biased composition (basic and acidic residues); sequence QKKKEKLERKKESLK. The interval 94–135 is disordered; it reads QKKKEKLERKKESLKVKKGKNSIDASEEKPVMRKKRGREDES. Position 115 is a phosphoserine (Ser115). The span at 119 to 134 shows a compositional bias: basic and acidic residues; sequence SEEKPVMRKKRGREDE. The 169-residue stretch at 235 to 403 folds into the Helicase ATP-binding domain; sequence RMLWENGING…WSLLNFLLPD (169 aa). 248–255 lines the ATP pocket; the sequence is DEMGLGKT. The short motif at 354–357 is the DEAH box element; it reads DEGH. 2 positions are modified to phosphoserine: Ser503 and Ser515. Residues 603–767 form the Helicase C-terminal domain; that stretch reads ILDRMLPELK…GLNLSKNFLD (165 aa).

Belongs to the SNF2/RAD54 helicase family. Highly expressed in proliferative tissues such as adult thymus and testis, and expressed at lower levels in uterus, small intestine, colon, and peripheral blood mononuclear cells. Also expressed in neoplastic cell lines including those derived from myeloid and lymphoid leukemias.

The protein localises to the nucleus. Functionally, plays an essential role in normal development and survival. Involved in regulation of the expansion or survival of lymphoid cells. Required for de novo or maintenance DNA methylation. May control silencing of the imprinted CDKN1C gene through DNA methylation. May play a role in formation and organization of heterochromatin, implying a functional role in the regulation of transcription and mitosis. The protein is Lymphoid-specific helicase of Homo sapiens (Human).